A 98-amino-acid chain; its full sequence is NADH-ubiquinone oxidoreductase chain 4L (98 aa).

3 consecutive transmembrane segments (helical) span residues 1–21, 28–48, and 59–79; these read MMSI…GVLI, STLL…ALLI, and APLI…ALLV.

This sequence belongs to the complex I subunit 4L family. Core subunit of respiratory chain NADH dehydrogenase (Complex I) which is composed of 45 different subunits.

The protein localises to the mitochondrion inner membrane. The enzyme catalyses a ubiquinone + NADH + 5 H(+)(in) = a ubiquinol + NAD(+) + 4 H(+)(out). Core subunit of the mitochondrial membrane respiratory chain NADH dehydrogenase (Complex I) which catalyzes electron transfer from NADH through the respiratory chain, using ubiquinone as an electron acceptor. Part of the enzyme membrane arm which is embedded in the lipid bilayer and involved in proton translocation. The chain is NADH-ubiquinone oxidoreductase chain 4L (MT-ND4L) from Osphranter robustus (Wallaroo).